The chain runs to 206 residues: LexA repressor (206 aa).

Residues 28 to 48 constitute a DNA-binding region (H-T-H motif); that stretch reads VREIGEAVGLASSSTVHGHLA. Catalysis depends on for autocatalytic cleavage activity residues Ser128 and Lys166.

Belongs to the peptidase S24 family. In terms of assembly, homodimer.

The catalysed reaction is Hydrolysis of Ala-|-Gly bond in repressor LexA.. In terms of biological role, represses a number of genes involved in the response to DNA damage (SOS response), including recA and lexA. In the presence of single-stranded DNA, RecA interacts with LexA causing an autocatalytic cleavage which disrupts the DNA-binding part of LexA, leading to derepression of the SOS regulon and eventually DNA repair. The protein is LexA repressor of Bacillus velezensis (strain DSM 23117 / BGSC 10A6 / LMG 26770 / FZB42) (Bacillus amyloliquefaciens subsp. plantarum).